Consider the following 185-residue polypeptide: MINEIKSDAQTRMDKCVESTKTQMAKVRTGRAHPSLLDTIQVPYYGSLTPLKQVASVSIGDARTLTVSVFDRTMIAAVEKAIMSSDLGLNPMSAGATIRIPLPALTEERRKDLIKVVRAEAENGRIAIRNVRRDANSNVKELEKEKECTEDDVRRSEDDVQKLTDAHIKLIDEILAAKEKELMEF.

This sequence belongs to the RRF family.

The protein resides in the cytoplasm. In terms of biological role, responsible for the release of ribosomes from messenger RNA at the termination of protein biosynthesis. May increase the efficiency of translation by recycling ribosomes from one round of translation to another. This is Ribosome-recycling factor from Shewanella pealeana (strain ATCC 700345 / ANG-SQ1).